Here is a 239-residue protein sequence, read N- to C-terminus: Large ribosomal subunit protein uL1 (239 aa).

Belongs to the universal ribosomal protein uL1 family. In terms of assembly, part of the 50S ribosomal subunit.

Functionally, binds directly to 23S rRNA. The L1 stalk is quite mobile in the ribosome, and is involved in E site tRNA release. In terms of biological role, protein L1 is also a translational repressor protein, it controls the translation of the L11 operon by binding to its mRNA. The protein is Large ribosomal subunit protein uL1 of Mycolicibacterium gilvum (strain PYR-GCK) (Mycobacterium gilvum (strain PYR-GCK)).